We begin with the raw amino-acid sequence, 600 residues long: tRNA(Ile)-lysidine synthase, chloroplastic (600 aa).

35 to 40 (SGGQDS) is a binding site for ATP.

It belongs to the tRNA(Ile)-lysidine synthase family.

The protein resides in the plastid. It is found in the chloroplast. The enzyme catalyses cytidine(34) in tRNA(Ile2) + L-lysine + ATP = lysidine(34) in tRNA(Ile2) + AMP + diphosphate + H(+). Ligates lysine onto the cytidine present at position 34 of the AUA codon-specific tRNA(Ile) that contains the anticodon CAU, in an ATP-dependent manner. Cytidine is converted to lysidine, thus changing the amino acid specificity of the tRNA from methionine to isoleucine. The sequence is that of tRNA(Ile)-lysidine synthase, chloroplastic from Tupiella akineta (Green alga).